We begin with the raw amino-acid sequence, 1111 residues long: ATP-dependent DNA helicase mph1 (1111 aa).

2 stretches are compositionally biased toward acidic residues: residues 1 to 18 (MSVSGDDSDDYFDHEIDD) and 47 to 65 (VFDESDISIDQGDGEDEFQ). Disordered stretches follow at residues 1–81 (MSVS…EDVE), 101–144 (FVTQ…HQPD), 210–240 (AFDSDLSLSPPRTTSQATRGPPVQSQFRTNR), and 259–280 (IPSQRGEQILSPPEKNEPPTHH). Polar residues-rich tracts occupy residues 132–143 (PTTTTVDASHQP) and 215–238 (LSLSPPRTTSQATRGPPVQSQFRT). A Helicase ATP-binding domain is found at 306–474 (IAQRGLFHNL…AVIDGLGIAK (169 aa)). 319–326 (LPTGLGKT) contributes to the ATP binding site. A DEAH box motif is present at residues 422–425 (DEAH). The Helicase C-terminal domain maps to 644–818 (YLKQVVLNHF…GTRFTFHDDT (175 aa)). Disordered regions lie at residues 836-898 (IDIP…RKPT), 998-1047 (SVLS…CTPE), and 1092-1111 (AERHVSRKRNRFVLDDDTEE). The segment covering 852–864 (KRARPPKRPPKKF) has biased composition (basic residues).

Belongs to the DEAD box helicase family. DEAH subfamily. FANCM sub-subfamily. In terms of assembly, interacts with the MHF histone-fold complex to form the FANCM-MHF complex.

The protein localises to the nucleus. It carries out the reaction ATP + H2O = ADP + phosphate + H(+). Its function is as follows. ATP-dependent DNA helicase involved in DNA damage repair by homologous recombination and in genome maintenance. Capable of unwinding D-loops. Plays a role in limiting crossover recombinants during mitotic DNA double-strand break (DSB) repair. Component of a FANCM-MHF complex which promotes gene conversion at blocked replication forks, probably by reversal of the stalled fork. The protein is ATP-dependent DNA helicase mph1 of Neosartorya fischeri (strain ATCC 1020 / DSM 3700 / CBS 544.65 / FGSC A1164 / JCM 1740 / NRRL 181 / WB 181) (Aspergillus fischerianus).